The primary structure comprises 152 residues: MFP1 attachment factor 1 (152 aa).

Disordered stretches follow at residues 1 to 33 and 107 to 152; these read MAEIDSAQSQETVTQETQNKPMTTSFSIWPPTQ and DTVK…ETEP. Residues 12-115 are WPP; that stretch reads TVTQETQNKP…IDTVKSRSAP (104 aa). The span at 134–152 shows a compositional bias: polar residues; sequence EPSSASGLTGEVSSVETEP.

Interacts with WAP through its WPP domain. Binds to MFP1 and FPP proteins. Expressed in young tomato leaves, young fruits, and flowers (at protein level).

It localises to the nucleus envelope. The protein localises to the cytoplasm. Its subcellular location is the golgi apparatus. It is found in the nucleus. The protein resides in the nucleus matrix. This is MFP1 attachment factor 1 (MAF1) from Solanum lycopersicum (Tomato).